Here is a 339-residue protein sequence, read N- to C-terminus: MRVYYDRDADLNLIKGKKVVIVGYGSQGHAHALNLKDSGVKDVAIALRKGSATAKKAEAAGFKVMEVAEAAKWADVMMMLTPDELQGEIYRDHLHDNMKQGAALLFAHGLNVHFNLIEPRADLDVLMVAPKGPGHTVRSEYQRGGGVPSLIAIHQDPSGNAHDLGLSYASAIGGGRAGIIETSFKEECETDLFGEQVVLCGGLVELIKAGFETLVEAGYAPEMAYFECLHEVKLIVDLIYEGGIANMNYSISNTAEYGEYVTGPRIVTAETKAEMKRVLADIQNGIFTRNWMLENKVNQTSFKATRAKLAAHPIEEVGAKLRDMMPWIKKGALVDKSKN.

Residues 1–182 (MRVYYDRDAD…GGGRAGIIET (182 aa)) enclose the KARI N-terminal Rossmann domain. Residues 24-27 (YGSQ), Arg48, Ser51, Thr53, and 83-86 (DELQ) each bind NADP(+). The active site involves His108. Gly134 contacts NADP(+). The 146-residue stretch at 183–328 (SFKEECETDL…AKLRDMMPWI (146 aa)) folds into the KARI C-terminal knotted domain. Mg(2+)-binding residues include Asp191, Glu195, Glu227, and Glu231. Ser252 contacts substrate.

It belongs to the ketol-acid reductoisomerase family. It depends on Mg(2+) as a cofactor.

The enzyme catalyses (2R)-2,3-dihydroxy-3-methylbutanoate + NADP(+) = (2S)-2-acetolactate + NADPH + H(+). The catalysed reaction is (2R,3R)-2,3-dihydroxy-3-methylpentanoate + NADP(+) = (S)-2-ethyl-2-hydroxy-3-oxobutanoate + NADPH + H(+). Its pathway is amino-acid biosynthesis; L-isoleucine biosynthesis; L-isoleucine from 2-oxobutanoate: step 2/4. It participates in amino-acid biosynthesis; L-valine biosynthesis; L-valine from pyruvate: step 2/4. In terms of biological role, involved in the biosynthesis of branched-chain amino acids (BCAA). Catalyzes an alkyl-migration followed by a ketol-acid reduction of (S)-2-acetolactate (S2AL) to yield (R)-2,3-dihydroxy-isovalerate. In the isomerase reaction, S2AL is rearranged via a Mg-dependent methyl migration to produce 3-hydroxy-3-methyl-2-ketobutyrate (HMKB). In the reductase reaction, this 2-ketoacid undergoes a metal-dependent reduction by NADPH to yield (R)-2,3-dihydroxy-isovalerate. This is Ketol-acid reductoisomerase (NADP(+)) from Rhodopseudomonas palustris (strain HaA2).